We begin with the raw amino-acid sequence, 947 residues long: DNA topoisomerase 1 (947 aa).

In terms of domain architecture, Toprim spans 16-140 (RRLVIVESPT…VKRMVFHEIT (125 aa)). Mg(2+) contacts are provided by Glu-22 and Asp-109. A Topo IA-type catalytic domain is found at 155 to 614 (DIDLVDAQET…FYFGGNHGVS (460 aa)). Residues 189–194 (SAGRVQ) are interaction with DNA. The O-(5'-phospho-DNA)-tyrosine intermediate role is filled by Tyr-343. Disordered regions lie at residues 733-771 (VLPKHDDDYGAADQGTKKTKKGRRASASQGPKPRTGSLL), 846-888 (KRAG…GETN), and 910-947 (ADRRARGPVKRPAKKARKVPAKKAARLAPARGISQSPR). Positions 915-934 (RGPVKRPAKKARKVPAKKAA) are enriched in basic residues.

The protein belongs to the type IA topoisomerase family. In terms of assembly, monomer. Mg(2+) serves as cofactor.

It carries out the reaction ATP-independent breakage of single-stranded DNA, followed by passage and rejoining.. Releases the supercoiling and torsional tension of DNA, which is introduced during the DNA replication and transcription, by transiently cleaving and rejoining one strand of the DNA duplex. Introduces a single-strand break via transesterification at a target site in duplex DNA. The scissile phosphodiester is attacked by the catalytic tyrosine of the enzyme, resulting in the formation of a DNA-(5'-phosphotyrosyl)-enzyme intermediate and the expulsion of a 3'-OH DNA strand. The free DNA strand then undergoes passage around the unbroken strand, thus removing DNA supercoils. Finally, in the religation step, the DNA 3'-OH attacks the covalent intermediate to expel the active-site tyrosine and restore the DNA phosphodiester backbone. This chain is DNA topoisomerase 1, found in Mycobacterium leprae (strain TN).